A 451-amino-acid polypeptide reads, in one-letter code: Tubulin alpha-3 chain (451 aa).

Glutamine 11 contributes to the GTP binding site. Lysine 40 bears the N6-acetyllysine mark. The GTP site is built by glutamate 71, glycine 144, threonine 145, threonine 179, asparagine 206, and asparagine 228. Residue glutamate 71 participates in Mg(2+) binding. The active site involves glutamate 254.

This sequence belongs to the tubulin family. As to quaternary structure, dimer of alpha and beta chains. A typical microtubule is a hollow water-filled tube with an outer diameter of 25 nm and an inner diameter of 15 nM. Alpha-beta heterodimers associate head-to-tail to form protofilaments running lengthwise along the microtubule wall with the beta-tubulin subunit facing the microtubule plus end conferring a structural polarity. Microtubules usually have 13 protofilaments but different protofilament numbers can be found in some organisms and specialized cells. Requires Mg(2+) as cofactor. Undergoes a tyrosination/detyrosination cycle, the cyclic removal and re-addition of a C-terminal tyrosine residue by the enzymes tubulin tyrosine carboxypeptidase (TTCP) and tubulin tyrosine ligase (TTL), respectively. In terms of processing, acetylation of alpha chains at Lys-40 stabilizes microtubules and affects affinity and processivity of microtubule motors. This modification has a role in multiple cellular functions, ranging from cell motility, cell cycle progression or cell differentiation to intracellular trafficking and signaling.

The protein localises to the cytoplasm. It localises to the cytoskeleton. It catalyses the reaction GTP + H2O = GDP + phosphate + H(+). In terms of biological role, tubulin is the major constituent of microtubules, a cylinder consisting of laterally associated linear protofilaments composed of alpha- and beta-tubulin heterodimers. Microtubules grow by the addition of GTP-tubulin dimers to the microtubule end, where a stabilizing cap forms. Below the cap, tubulin dimers are in GDP-bound state, owing to GTPase activity of alpha-tubulin. The polypeptide is Tubulin alpha-3 chain (TUBA3) (Hordeum vulgare (Barley)).